Here is a 440-residue protein sequence, read N- to C-terminus: UDP-N-acetylmuramoylalanine--D-glutamate ligase (440 aa).

Residue 113 to 119 (GTNGKST) coordinates ATP.

It belongs to the MurCDEF family.

It is found in the cytoplasm. The enzyme catalyses UDP-N-acetyl-alpha-D-muramoyl-L-alanine + D-glutamate + ATP = UDP-N-acetyl-alpha-D-muramoyl-L-alanyl-D-glutamate + ADP + phosphate + H(+). It participates in cell wall biogenesis; peptidoglycan biosynthesis. Functionally, cell wall formation. Catalyzes the addition of glutamate to the nucleotide precursor UDP-N-acetylmuramoyl-L-alanine (UMA). The polypeptide is UDP-N-acetylmuramoylalanine--D-glutamate ligase (murD) (Buchnera aphidicola subsp. Acyrthosiphon pisum (strain APS) (Acyrthosiphon pisum symbiotic bacterium)).